Consider the following 139-residue polypeptide: Immunogenic miracidial antigen 8I' (139 aa).

The interval 61–139 (IDVGDEDYHD…PKKYGSGYKH (79 aa)) is disordered. Positions 64–85 (GDEDYHDGDDDVDYTDDVDDVD) are enriched in acidic residues. Positions 90–103 (SPSQLLQGGYQRNQ) are enriched in polar residues.

Belongs to the immunogenic miracidial antigen family.

This is Immunogenic miracidial antigen 8I' (8I') from Schistosoma japonicum (Blood fluke).